Consider the following 397-residue polypeptide: Acetate kinase (397 aa).

Mg(2+) is bound at residue N8. K15 is a binding site for ATP. Residue R89 coordinates substrate. D146 (proton donor/acceptor) is an active-site residue. ATP is bound by residues 206–210 (HLGNG), 281–283 (DLR), and 329–333 (GVGEN). Position 382 (E382) interacts with Mg(2+).

Belongs to the acetokinase family. Homodimer. It depends on Mg(2+) as a cofactor. Mn(2+) is required as a cofactor.

The protein localises to the cytoplasm. The enzyme catalyses acetate + ATP = acetyl phosphate + ADP. Its pathway is metabolic intermediate biosynthesis; acetyl-CoA biosynthesis; acetyl-CoA from acetate: step 1/2. Its function is as follows. Catalyzes the formation of acetyl phosphate from acetate and ATP. Can also catalyze the reverse reaction. This chain is Acetate kinase, found in Bacillus anthracis.